The primary structure comprises 199 residues: Holliday junction branch migration complex subunit RuvA (199 aa).

Residues 1 to 64 (MIALLTGKLA…EDAINLYGFR (64 aa)) form a domain I region. The tract at residues 65-143 (TQQEKELFQL…KLGLAQPQAG (79 aa)) is domain II. The flexible linker stretch occupies residues 144–148 (GTTAP). The tract at residues 149–199 (AKQEIRDDVLSALINLGYKEAVVQKALAELKVTEDATVELVLKQALKILMK) is domain III.

Belongs to the RuvA family. In terms of assembly, homotetramer. Forms an RuvA(8)-RuvB(12)-Holliday junction (HJ) complex. HJ DNA is sandwiched between 2 RuvA tetramers; dsDNA enters through RuvA and exits via RuvB. An RuvB hexamer assembles on each DNA strand where it exits the tetramer. Each RuvB hexamer is contacted by two RuvA subunits (via domain III) on 2 adjacent RuvB subunits; this complex drives branch migration. In the full resolvosome a probable DNA-RuvA(4)-RuvB(12)-RuvC(2) complex forms which resolves the HJ.

The protein resides in the cytoplasm. Its function is as follows. The RuvA-RuvB-RuvC complex processes Holliday junction (HJ) DNA during genetic recombination and DNA repair, while the RuvA-RuvB complex plays an important role in the rescue of blocked DNA replication forks via replication fork reversal (RFR). RuvA specifically binds to HJ cruciform DNA, conferring on it an open structure. The RuvB hexamer acts as an ATP-dependent pump, pulling dsDNA into and through the RuvAB complex. HJ branch migration allows RuvC to scan DNA until it finds its consensus sequence, where it cleaves and resolves the cruciform DNA. The sequence is that of Holliday junction branch migration complex subunit RuvA from Citrifermentans bemidjiense (strain ATCC BAA-1014 / DSM 16622 / JCM 12645 / Bem) (Geobacter bemidjiensis).